A 343-amino-acid polypeptide reads, in one-letter code: Methionine import ATP-binding protein MetN (343 aa).

The 240-residue stretch at 2-241 (IKLSNITKVF…PKTPLAQKFI (240 aa)) folds into the ABC transporter domain. 38-45 (GASGAGKS) contacts ATP.

The protein belongs to the ABC transporter superfamily. Methionine importer (TC 3.A.1.24) family. The complex is composed of two ATP-binding proteins (MetN), two transmembrane proteins (MetI) and a solute-binding protein (MetQ).

It is found in the cell inner membrane. The enzyme catalyses L-methionine(out) + ATP + H2O = L-methionine(in) + ADP + phosphate + H(+). It carries out the reaction D-methionine(out) + ATP + H2O = D-methionine(in) + ADP + phosphate + H(+). Its function is as follows. Part of the ABC transporter complex MetNIQ involved in methionine import. Responsible for energy coupling to the transport system. In Shigella boydii serotype 4 (strain Sb227), this protein is Methionine import ATP-binding protein MetN.